Reading from the N-terminus, the 301-residue chain is Acetyl-coenzyme A carboxylase carboxyl transferase subunit beta (301 aa).

Positions 25–294 (LWIKCPETGE…SAANDVTRGA (270 aa)) constitute a CoA carboxyltransferase N-terminal domain.

It belongs to the AccD/PCCB family. Acetyl-CoA carboxylase is a heterohexamer composed of biotin carboxyl carrier protein (AccB), biotin carboxylase (AccC) and two subunits each of ACCase subunit alpha (AccA) and ACCase subunit beta (AccD).

The protein localises to the cytoplasm. The enzyme catalyses N(6)-carboxybiotinyl-L-lysyl-[protein] + acetyl-CoA = N(6)-biotinyl-L-lysyl-[protein] + malonyl-CoA. Its pathway is lipid metabolism; malonyl-CoA biosynthesis; malonyl-CoA from acetyl-CoA: step 1/1. Functionally, component of the acetyl coenzyme A carboxylase (ACC) complex. Biotin carboxylase (BC) catalyzes the carboxylation of biotin on its carrier protein (BCCP) and then the CO(2) group is transferred by the transcarboxylase to acetyl-CoA to form malonyl-CoA. This Rhizobium etli (strain ATCC 51251 / DSM 11541 / JCM 21823 / NBRC 15573 / CFN 42) protein is Acetyl-coenzyme A carboxylase carboxyl transferase subunit beta.